Consider the following 33-residue polypeptide: Photosystem II reaction center protein T (33 aa).

A helical transmembrane segment spans residues 3-23 (ALVYTFLLVSTLGIIFFAIFF).

This sequence belongs to the PsbT family. In terms of assembly, PSII is composed of 1 copy each of membrane proteins PsbA, PsbB, PsbC, PsbD, PsbE, PsbF, PsbH, PsbI, PsbJ, PsbK, PsbL, PsbM, PsbT, PsbY, PsbZ, Psb30/Ycf12, at least 3 peripheral proteins of the oxygen-evolving complex and a large number of cofactors. It forms dimeric complexes.

It localises to the plastid. The protein resides in the chloroplast thylakoid membrane. In terms of biological role, found at the monomer-monomer interface of the photosystem II (PS II) dimer, plays a role in assembly and dimerization of PSII. PSII is a light-driven water plastoquinone oxidoreductase, using light energy to abstract electrons from H(2)O, generating a proton gradient subsequently used for ATP formation. This chain is Photosystem II reaction center protein T, found in Asparagus officinalis (Garden asparagus).